Consider the following 232-residue polypeptide: MTNADPHELQKFSDLAHRWWDPNAEFKPLHDLNPVRLGWIDAHAHLAGKRALDIGCGGGILSESMAGLGAQVKGIDLSTEALGVADLHSLESGITVDYEAIAAEAIAAREPGTYDVVTCMEMLEHVPSPGDIVAACATLVKPGGWVFFSTLNRNLKAYLFAVIGAEYIAQMLPKGTHDYARFIRPSELAGFVRATDLHIVEIKGITYHPIGKRFALSNDTDINYLVACRRGA.

The S-adenosyl-L-methionine site is built by Arg36, Gly55, Asp76, and Met120.

Belongs to the methyltransferase superfamily. UbiG/COQ3 family.

The enzyme catalyses a 3-demethylubiquinol + S-adenosyl-L-methionine = a ubiquinol + S-adenosyl-L-homocysteine + H(+). The catalysed reaction is a 3-(all-trans-polyprenyl)benzene-1,2-diol + S-adenosyl-L-methionine = a 2-methoxy-6-(all-trans-polyprenyl)phenol + S-adenosyl-L-homocysteine + H(+). The protein operates within cofactor biosynthesis; ubiquinone biosynthesis. Functionally, O-methyltransferase that catalyzes the 2 O-methylation steps in the ubiquinone biosynthetic pathway. In Burkholderia lata (strain ATCC 17760 / DSM 23089 / LMG 22485 / NCIMB 9086 / R18194 / 383), this protein is Ubiquinone biosynthesis O-methyltransferase.